The sequence spans 533 residues: Probable galacturonosyltransferase 13 (533 aa).

Residues 1-40 (MQLHISPSMRSITISSSNEFIDLMKIKVAARHISYRTLFH) are Cytoplasmic-facing. The helical; Signal-anchor for type II membrane protein transmembrane segment at 41–61 (TILILAFLLPFVFILTAVVTL) threads the bilayer. The Lumenal segment spans residues 62 to 533 (EGVNKCSSFD…DFIKNCHILE (472 aa)). N-linked (GlcNAc...) asparagine glycans are attached at residues Asn306, Asn396, Asn445, and Asn520.

Belongs to the glycosyltransferase 8 family. As to expression, expressed in roots, inflorescences, siliques, leaves and stems. Accumulates in pollen grains.

It localises to the golgi apparatus membrane. The protein operates within glycan metabolism; pectin biosynthesis. In terms of biological role, may be involved in pectin and/or xylans biosynthesis in cell walls. Together with GAUT14, required for pollen tube growth, possibly through the regulation of pectin biosynthesis and repartition in the pollen tube wall. The polypeptide is Probable galacturonosyltransferase 13 (Arabidopsis thaliana (Mouse-ear cress)).